The primary structure comprises 286 residues: S-adenosylmethionine-dependent methyltransferase UmaA (286 aa).

Residues 32 to 33 (YT), 67 to 75 (LLDIGCGWG), 93 to 98 (TLSRNQ), and 122 to 123 (WD) each bind S-adenosyl-L-methionine. Cys268 is a catalytic residue.

This sequence belongs to the CFA/CMAS family.

It localises to the cytoplasm. Methyltransferase that modifies short-chain fatty acids. In vitro, catalyzes the transfer of the methyl group from S-adenosyl-L-methionine (SAM) to the double bond of phospholipid-linked oleic acid to produce tuberculostearic acid (10-methylstearic-acid or TSA). This chain is S-adenosylmethionine-dependent methyltransferase UmaA, found in Mycobacterium tuberculosis (strain ATCC 25618 / H37Rv).